A 245-amino-acid chain; its full sequence is 8-amino-3,8-dideoxy-manno-octulosonate cytidylyltransferase (245 aa).

The protein belongs to the KdsB family.

Its subcellular location is the cytoplasm. It catalyses the reaction 8-amino-3,8-dideoxy-alpha-D-manno-octulosonate + CTP = CMP-8-amino-3,8-dideoxy-alpha-D-manno-oct-2-ulosonate + diphosphate. It functions in the pathway bacterial outer membrane biogenesis; lipopolysaccharide biosynthesis. In terms of biological role, activates KDO8N (a required 8-carbon sugar) for incorporation into bacterial lipopolysaccharide in the Shewanella genus. The protein is 8-amino-3,8-dideoxy-manno-octulosonate cytidylyltransferase of Shewanella frigidimarina (strain NCIMB 400).